We begin with the raw amino-acid sequence, 81 residues long: Exodeoxyribonuclease 7 small subunit (81 aa).

Belongs to the XseB family. In terms of assembly, heterooligomer composed of large and small subunits.

It localises to the cytoplasm. It catalyses the reaction Exonucleolytic cleavage in either 5'- to 3'- or 3'- to 5'-direction to yield nucleoside 5'-phosphates.. In terms of biological role, bidirectionally degrades single-stranded DNA into large acid-insoluble oligonucleotides, which are then degraded further into small acid-soluble oligonucleotides. This chain is Exodeoxyribonuclease 7 small subunit, found in Pseudomonas syringae pv. syringae (strain B728a).